Consider the following 696-residue polypeptide: Glycine--tRNA ligase beta subunit (696 aa).

It belongs to the class-II aminoacyl-tRNA synthetase family. In terms of assembly, tetramer of two alpha and two beta subunits.

The protein resides in the cytoplasm. It carries out the reaction tRNA(Gly) + glycine + ATP = glycyl-tRNA(Gly) + AMP + diphosphate. The chain is Glycine--tRNA ligase beta subunit from Methylorubrum extorquens (strain CM4 / NCIMB 13688) (Methylobacterium extorquens).